Here is a 149-residue protein sequence, read N- to C-terminus: Transcriptional repressor NrdR (149 aa).

The segment at 3–34 (CPFCSAVDTKVIDSRLVGEGSQVRRRRQCLVC) is a zinc-finger region. One can recognise an ATP-cone domain in the interval 49–139 (PRVIKSNEVR…VYRSFEDIRE (91 aa)).

It belongs to the NrdR family. Requires Zn(2+) as cofactor.

Negatively regulates transcription of bacterial ribonucleotide reductase nrd genes and operons by binding to NrdR-boxes. The sequence is that of Transcriptional repressor NrdR from Pectobacterium atrosepticum (strain SCRI 1043 / ATCC BAA-672) (Erwinia carotovora subsp. atroseptica).